The chain runs to 347 residues: Ferredoxin--NADP reductase 1 (347 aa).

Residues T26, D45, Q53, Y58, V98, F133, D298, and S339 each coordinate FAD.

It belongs to the ferredoxin--NADP reductase type 2 family. Homodimer. FAD is required as a cofactor.

It carries out the reaction 2 reduced [2Fe-2S]-[ferredoxin] + NADP(+) + H(+) = 2 oxidized [2Fe-2S]-[ferredoxin] + NADPH. The sequence is that of Ferredoxin--NADP reductase 1 from Chloroherpeton thalassium (strain ATCC 35110 / GB-78).